Consider the following 190-residue polypeptide: ATP synthase subunit delta (190 aa).

This sequence belongs to the ATPase delta chain family. F-type ATPases have 2 components, F(1) - the catalytic core - and F(0) - the membrane proton channel. F(1) has five subunits: alpha(3), beta(3), gamma(1), delta(1), epsilon(1). F(0) has three main subunits: a(1), b(2) and c(10-14). The alpha and beta chains form an alternating ring which encloses part of the gamma chain. F(1) is attached to F(0) by a central stalk formed by the gamma and epsilon chains, while a peripheral stalk is formed by the delta and b chains.

It is found in the cell inner membrane. Functionally, f(1)F(0) ATP synthase produces ATP from ADP in the presence of a proton or sodium gradient. F-type ATPases consist of two structural domains, F(1) containing the extramembraneous catalytic core and F(0) containing the membrane proton channel, linked together by a central stalk and a peripheral stalk. During catalysis, ATP synthesis in the catalytic domain of F(1) is coupled via a rotary mechanism of the central stalk subunits to proton translocation. Its function is as follows. This protein is part of the stalk that links CF(0) to CF(1). It either transmits conformational changes from CF(0) to CF(1) or is implicated in proton conduction. This Methylobacterium radiotolerans (strain ATCC 27329 / DSM 1819 / JCM 2831 / NBRC 15690 / NCIMB 10815 / 0-1) protein is ATP synthase subunit delta.